Here is a 608-residue protein sequence, read N- to C-terminus: UvrABC system protein C (608 aa).

The region spanning 13 to 91 (HKPGVYIMHD…IKKNSPKYNI (79 aa)) is the GIY-YIG domain. In terms of domain architecture, UVR spans 202 to 237 (DELTKKLTDKMMAASKNLNFELAAKLRDSITNIQVI).

It belongs to the UvrC family. Interacts with UvrB in an incision complex.

The protein localises to the cytoplasm. In terms of biological role, the UvrABC repair system catalyzes the recognition and processing of DNA lesions. UvrC both incises the 5' and 3' sides of the lesion. The N-terminal half is responsible for the 3' incision and the C-terminal half is responsible for the 5' incision. The protein is UvrABC system protein C of Finegoldia magna (strain ATCC 29328 / DSM 20472 / WAL 2508) (Peptostreptococcus magnus).